The chain runs to 596 residues: MNNIRNFSIIAHIDHGKSTLADRIISECGAVDSRVMSAQVMDTMDIEKERGITIKAQSVRLTYKLEGQIYILNLIDTPGHVDFSYEVSRSLASCEGALLVVDASQGVEAQTIANVYIALENNLEIIPVINKIDLPAAEPQRVKNEIEHIIGLDCSEAIEVSAKTGVGIKELIETIIRKIPPPKPGENNPFKSLIYDSWFDNYLGALALVRVYDGAVKKGDEVYVMGTDKKHTVLDLMYPNPIAPIKTNELKTGEVGIIVLGLKNVSDVSVGDTITLAKNRALEAIGGFEKAKPFVFAGLYPIDTDKFEDLRDALDKLKLNDSSISYEPETSAALGFGFRVGFLGLLHMEVVKERLEREFGLDLIATAPTVTYEVVQTDGVSVEIQNPSELPPVNKIEFIKEPYVKATIITPSEFLGNIITLLNNRRAVQTKMDYITTTRVLLEYDIPMNEIVMDFYDKLKSATKGYASFDYEPSDYRVGDLVKLDIKVAGEAVDALSIIVPEEKAMSKGRDFVKTMKELVPRQLFEVAIQASIGNKVIARETVKSMGKNVTAKCYGGDITRKRKLLEKQKEGKKRMKAIGKVTLPQEAFLSVLKID.

One can recognise a tr-type G domain in the interval 2-183; that stretch reads NNIRNFSIIA…TIIRKIPPPK (182 aa). GTP-binding positions include 14-19 and 130-133; these read DHGKST and NKID.

The protein belongs to the TRAFAC class translation factor GTPase superfamily. Classic translation factor GTPase family. LepA subfamily.

The protein resides in the cell inner membrane. It carries out the reaction GTP + H2O = GDP + phosphate + H(+). Functionally, required for accurate and efficient protein synthesis under certain stress conditions. May act as a fidelity factor of the translation reaction, by catalyzing a one-codon backward translocation of tRNAs on improperly translocated ribosomes. Back-translocation proceeds from a post-translocation (POST) complex to a pre-translocation (PRE) complex, thus giving elongation factor G a second chance to translocate the tRNAs correctly. Binds to ribosomes in a GTP-dependent manner. This Campylobacter fetus subsp. fetus (strain 82-40) protein is Elongation factor 4.